A 335-amino-acid polypeptide reads, in one-letter code: Pyridoxal 5'-phosphate synthase subunit PdxS (335 aa).

D59 provides a ligand contact to D-ribose 5-phosphate. K116 functions as the Schiff-base intermediate with D-ribose 5-phosphate in the catalytic mechanism. Position 188 (G188) interacts with D-ribose 5-phosphate. K200 contacts D-glyceraldehyde 3-phosphate. Residues G253 and 274-275 (GS) contribute to the D-ribose 5-phosphate site.

It belongs to the PdxS/SNZ family. As to quaternary structure, in the presence of PdxT, forms a dodecamer of heterodimers.

It carries out the reaction aldehydo-D-ribose 5-phosphate + D-glyceraldehyde 3-phosphate + L-glutamine = pyridoxal 5'-phosphate + L-glutamate + phosphate + 3 H2O + H(+). Its pathway is cofactor biosynthesis; pyridoxal 5'-phosphate biosynthesis. Functionally, catalyzes the formation of pyridoxal 5'-phosphate from ribose 5-phosphate (RBP), glyceraldehyde 3-phosphate (G3P) and ammonia. The ammonia is provided by the PdxT subunit. Can also use ribulose 5-phosphate and dihydroxyacetone phosphate as substrates, resulting from enzyme-catalyzed isomerization of RBP and G3P, respectively. In Desulfurococcus amylolyticus (strain DSM 18924 / JCM 16383 / VKM B-2413 / 1221n) (Desulfurococcus kamchatkensis), this protein is Pyridoxal 5'-phosphate synthase subunit PdxS.